The sequence spans 597 residues: Ribosomal oxygenase 1 (597 aa).

The residue at position 1 (Met-1) is an N-acetylmethionine. The segment at 1–138 (MDELPNGNGA…HVDDPERPWD (138 aa)) is disordered. Composition is skewed to basic residues over residues 14-24 (KRGRGRRRRQP) and 37-48 (RPRKVRRHRKSA). A compositionally biased stretch (low complexity) spans 49-62 (ASRVAALRARALLS). Phosphoserine is present on residues Ser-62 and Ser-65. Residues 72-81 (VRGKRERPAE) are compositionally biased toward basic and acidic residues. Ser-86 is modified (phosphoserine). Residues 250–395 (CSLRLLCPQA…DFLEAVLPLA (146 aa)) enclose the JmjC domain. Fe cation contacts are provided by His-296, Asp-298, and His-361.

Belongs to the ROX family. NO66 subfamily. In terms of assembly, interacts with SP7/OSX; the interaction is direct. Interacts with MYC. Interacts with PHF19; leading to its recruitment to H3K36me3 sites. The cofactor is Fe(2+).

The protein localises to the nucleus. It localises to the nucleolus. The protein resides in the nucleoplasm. The catalysed reaction is N(6),N(6)-dimethyl-L-lysyl(36)-[histone H3] + 2 2-oxoglutarate + 2 O2 = L-lysyl(36)-[histone H3] + 2 formaldehyde + 2 succinate + 2 CO2. It catalyses the reaction N(6)-methyl-L-lysyl-[protein] + 2-oxoglutarate + O2 = L-lysyl-[protein] + formaldehyde + succinate + CO2. It carries out the reaction L-histidyl-[protein] + 2-oxoglutarate + O2 = (3S)-3-hydroxy-L-histidyl-[protein] + succinate + CO2. In terms of biological role, oxygenase that can act as both a histone lysine demethylase and a ribosomal histidine hydroxylase. Specifically demethylates 'Lys-4' (H3K4me) and 'Lys-36' (H3K36me) of histone H3, thereby playing a central role in histone code. Preferentially demethylates trimethylated H3 'Lys-4' (H3K4me3) and monomethylated H3 'Lys-4' (H3K4me1) residues, while it has weaker activity for dimethylated H3 'Lys-36' (H3K36me2). Acts as a regulator of osteoblast differentiation via its interaction with SP7/OSX by demethylating H3K4me and H3K36me, thereby inhibiting SP7/OSX-mediated promoter activation. Also catalyzes demethylation of non-histone proteins, such as CGAS: demethylation of monomethylated CGAS promotes interaction between CGAS and PARP1, followed by PARP1 inactivation. Also catalyzes the hydroxylation of 60S ribosomal protein L8 on 'His-216', thereby playing a role in ribosome biogenesis. Participates in MYC-induced transcriptional activation. The chain is Ribosomal oxygenase 1 from Rattus norvegicus (Rat).